The sequence spans 457 residues: MSNKAWGGRFQSEPEAWVDAFNASINFDHLLIDEDIQGSIAHATMLAQQGILTEDESNTIIKGLQEIQQDYHDGKIEFTEALEDIHLNIEHELIERIGAVGGKLHTGRSRNDQVATDLHLYTKKAVKEIIHLIHTLQETIVKLADDHVDTIMPGYTHLQRAQPISFAHHVMTYFWMLERDKNRFEDALKRIDINPLGAAALSGTTHPIDRAKTQELLDFAALYENSLDAVSDRDFVVETLNDISLVMIHLSRFSEEIIFWSSDEAKFITLSDSFSTGSSIMPQKKNPDMAELIRGKTGRTTGHLMSMLMTLKGLPLAYNKDMQEDKEGLFDAVHTVTGSLRIFEGMLASLTVNTDRLNETVHQDFSNATELADYLVEKDVPFREAHAIVGQIVYWCIQHDCYLLDVPLEKYQEFSSSIDDTIYSYLKPENCLKRRKSYGSTGQESVRHQIKVAKDLL.

The protein belongs to the lyase 1 family. Argininosuccinate lyase subfamily.

The protein resides in the cytoplasm. The enzyme catalyses 2-(N(omega)-L-arginino)succinate = fumarate + L-arginine. Its pathway is amino-acid biosynthesis; L-arginine biosynthesis; L-arginine from L-ornithine and carbamoyl phosphate: step 3/3. The protein is Argininosuccinate lyase of Staphylococcus carnosus (strain TM300).